A 125-amino-acid chain; its full sequence is Large ribosomal subunit protein bL12 (125 aa).

This sequence belongs to the bacterial ribosomal protein bL12 family. In terms of assembly, homodimer. Part of the ribosomal stalk of the 50S ribosomal subunit. Forms a multimeric L10(L12)X complex, where L10 forms an elongated spine to which 2 to 4 L12 dimers bind in a sequential fashion. Binds GTP-bound translation factors.

Forms part of the ribosomal stalk which helps the ribosome interact with GTP-bound translation factors. Is thus essential for accurate translation. The chain is Large ribosomal subunit protein bL12 from Gluconobacter oxydans (strain 621H) (Gluconobacter suboxydans).